A 161-amino-acid polypeptide reads, in one-letter code: Nucleotide-binding protein amb3630 (161 aa).

Belongs to the YajQ family.

Its function is as follows. Nucleotide-binding protein. The protein is Nucleotide-binding protein amb3630 of Paramagnetospirillum magneticum (strain ATCC 700264 / AMB-1) (Magnetospirillum magneticum).